The sequence spans 330 residues: Glucokinase (330 aa).

14 to 19 lines the ATP pocket; that stretch reads ADIGGT.

The protein belongs to the bacterial glucokinase family.

The protein resides in the cytoplasm. The catalysed reaction is D-glucose + ATP = D-glucose 6-phosphate + ADP + H(+). This is Glucokinase from Colwellia psychrerythraea (strain 34H / ATCC BAA-681) (Vibrio psychroerythus).